We begin with the raw amino-acid sequence, 196 residues long: Nucleoside triphosphate pyrophosphatase (196 aa).

The active-site Proton acceptor is D70.

This sequence belongs to the Maf family. A divalent metal cation serves as cofactor.

It localises to the cytoplasm. The catalysed reaction is a ribonucleoside 5'-triphosphate + H2O = a ribonucleoside 5'-phosphate + diphosphate + H(+). It carries out the reaction a 2'-deoxyribonucleoside 5'-triphosphate + H2O = a 2'-deoxyribonucleoside 5'-phosphate + diphosphate + H(+). In terms of biological role, nucleoside triphosphate pyrophosphatase. May have a dual role in cell division arrest and in preventing the incorporation of modified nucleotides into cellular nucleic acids. The polypeptide is Nucleoside triphosphate pyrophosphatase (Gloeothece citriformis (strain PCC 7424) (Cyanothece sp. (strain PCC 7424))).